Reading from the N-terminus, the 475-residue chain is Ribulose bisphosphate carboxylase large chain (475 aa).

Residues 1 to 2 (MS) constitute a propeptide that is removed on maturation. N-acetylproline is present on P3. K14 carries the post-translational modification N6,N6,N6-trimethyllysine. Residues N123 and T173 each contribute to the substrate site. K175 acts as the Proton acceptor in catalysis. K177 lines the substrate pocket. Mg(2+)-binding residues include K201, D203, and E204. An N6-carboxylysine modification is found at K201. H294 functions as the Proton acceptor in the catalytic mechanism. The substrate site is built by R295, H327, and S379.

It belongs to the RuBisCO large chain family. Type I subfamily. Heterohexadecamer of 8 large chains and 8 small chains; disulfide-linked. The disulfide link is formed within the large subunit homodimers. Requires Mg(2+) as cofactor. Post-translationally, the disulfide bond which can form in the large chain dimeric partners within the hexadecamer appears to be associated with oxidative stress and protein turnover.

It is found in the plastid. The protein localises to the chloroplast. It catalyses the reaction 2 (2R)-3-phosphoglycerate + 2 H(+) = D-ribulose 1,5-bisphosphate + CO2 + H2O. The catalysed reaction is D-ribulose 1,5-bisphosphate + O2 = 2-phosphoglycolate + (2R)-3-phosphoglycerate + 2 H(+). RuBisCO catalyzes two reactions: the carboxylation of D-ribulose 1,5-bisphosphate, the primary event in carbon dioxide fixation, as well as the oxidative fragmentation of the pentose substrate in the photorespiration process. Both reactions occur simultaneously and in competition at the same active site. In Buxus microphylla (Littleleaf boxwood), this protein is Ribulose bisphosphate carboxylase large chain.